A 432-amino-acid polypeptide reads, in one-letter code: UDP-N-acetylmuramate--L-alanine ligase (432 aa).

Gly108–Ser114 is a binding site for ATP.

The protein belongs to the MurCDEF family.

The protein localises to the cytoplasm. The catalysed reaction is UDP-N-acetyl-alpha-D-muramate + L-alanine + ATP = UDP-N-acetyl-alpha-D-muramoyl-L-alanine + ADP + phosphate + H(+). The protein operates within cell wall biogenesis; peptidoglycan biosynthesis. Its function is as follows. Cell wall formation. In Bacillus velezensis (strain DSM 23117 / BGSC 10A6 / LMG 26770 / FZB42) (Bacillus amyloliquefaciens subsp. plantarum), this protein is UDP-N-acetylmuramate--L-alanine ligase.